The chain runs to 712 residues: Probable metal-nicotianamine transporter YSL11 (712 aa).

Residues 25–48 (RRNTTAAARGNAGEEEEEAEAVAP) form a disordered region. 14 helical membrane passes run 70–90 (AFVVGFLLSIMFNIIVMKLSL), 93–113 (GVIPSLNVSASLLGFFLVRLW), 138–158 (CVVSAYGVAFSGGFGSYLFGM), 180–200 (LGWIIGFMFLVSFVGLFALVP), 242–262 (LGKYFSISFLWAFFQWFYTAG), 300–320 (IVNVSLLIGGIISWGIMWPLI), 345–365 (VFITIAVILGDGLYNFVKVFG), 418–438 (VAIGGYVVLAVITSGCLPLII), 446–466 (ILIAYIFAPIMAFCNAYGSGL), 478–498 (LAIFVFGAWAGASHGGVLVGL), 532–552 (FVSQVIGTAMGCVIAPCVFWL), 593–613 (LTLCYIAFVAAFIINLIKDLV), 631–651 (FYLGPYFAIDMFMGSVILYFW), and 666–686 (VASGLMCGDGLWALPQAVLSL).

It belongs to the YSL (TC 2.A.67.2) family.

Its subcellular location is the membrane. Functionally, may be involved in the transport of nicotianamine-chelated metals. The chain is Probable metal-nicotianamine transporter YSL11 (YSL11) from Oryza sativa subsp. japonica (Rice).